The following is a 61-amino-acid chain: Large ribosomal subunit protein bL32 (61 aa).

The span at 1–16 (MAVPKRKTSPSKRGMR) shows a compositional bias: basic residues. Residues 1 to 35 (MAVPKRKTSPSKRGMRRSADGLKSATYVEDKNSGE) are disordered.

Belongs to the bacterial ribosomal protein bL32 family.

The chain is Large ribosomal subunit protein bL32 from Agrobacterium fabrum (strain C58 / ATCC 33970) (Agrobacterium tumefaciens (strain C58)).